Consider the following 109-residue polypeptide: Small ribosomal subunit protein uS17 (109 aa).

The protein belongs to the universal ribosomal protein uS17 family. Part of the 30S ribosomal subunit.

Functionally, one of the primary rRNA binding proteins, it binds specifically to the 5'-end of 16S ribosomal RNA. The polypeptide is Small ribosomal subunit protein uS17 (Thermoplasma volcanium (strain ATCC 51530 / DSM 4299 / JCM 9571 / NBRC 15438 / GSS1)).